The primary structure comprises 406 residues: Putative colanic acid biosynthesis glycosyltransferase WcaL (406 aa).

The protein belongs to the glycosyltransferase group 1 family. Glycosyltransferase 4 subfamily.

It participates in slime biogenesis; slime polysaccharide biosynthesis. This chain is Putative colanic acid biosynthesis glycosyltransferase WcaL (wcaL), found in Escherichia coli (strain K12).